The primary structure comprises 152 residues: Ribosome maturation factor RimP (152 aa).

This sequence belongs to the RimP family.

The protein resides in the cytoplasm. In terms of biological role, required for maturation of 30S ribosomal subunits. This Paraburkholderia phymatum (strain DSM 17167 / CIP 108236 / LMG 21445 / STM815) (Burkholderia phymatum) protein is Ribosome maturation factor RimP.